Consider the following 146-residue polypeptide: Decarboxylase dmxR15 (146 aa).

Residues Pro31–Thr126 enclose the EthD domain.

This sequence belongs to the tpcK family.

It carries out the reaction atrochrysone carboxylate + H(+) = atrochrysone + CO2. It functions in the pathway secondary metabolite biosynthesis. In terms of biological role, decarboxylase; part of the gene cluster that mediates the biosynthesis of the dimeric xanthones cryptosporioptides. The pathway begins with the synthesis of atrochrysone thioester by the polyketide synthase dmx-nrPKS. The atrochrysone carboxyl ACP thioesterase dmxR1 then breaks the thioester bond and releases the atrochrysone carboxylic acid from dmx-nrPKS. Atrochrysone carboxylic acid is decarboxylated by the decarboxylase dmxR15, and oxidized by the anthrone oxygenase dmxR16 to yield emodin. Emodin is then reduced to emodin hydroquinone by the oxidoreductase dmxR7. A-ring reduction by the short chain dehydrogenase dmxR18, dehydration by the scytalone dehydratase-like protein dmxR17 and probable spontaneous re-oxidation, results in overall deoxygenation to chrysophanol. Baeyer-Villiger oxidation by the Baeyer-Villiger monooxygenase (BVMO) dmxR6 then yields monodictylactone in equilibrium with monodictyphenone. In the case of the cryptosporioptides biosynthesis, monodictylactone is reduced at C-12 to an alcohol (by the short chain dehydrogenases dmxR12 or dmxR8) and hydroxylated at C-5 by dmxR9, yielding the electron-rich aromatic which could eliminate H(2)O to form the ortho-quinonemethide, followed by tautomerisation to paraquinone and complete the formal reduction to produce the 10-methylgroup. Conjugate addition of C-4a-OH to the resulting paraquinone by the monooxygenase dmxR10 then gives cyclohexadienone, which is then reduced at C-5 by the short chain dehydrogenase dmxR3 to give the dihydroxanthone. The 6,7-epoxide in the cryptosporioptides could be introduced by the cytochrome P450 monooxygenase dmxL3. The highly reducing PKS dmxL2 manufactures butyrate, which is further carboxylated by dmxL1 to form ethylmalonate. It is not yet clear whether the carboxylation occurs while the butyrate is attached to the ACP of dmxL2, but this unusual fungal metabolite could then be esterified to O-5 by the O-acetyltransferase dmxR13. Finally, dimerization performed by dmxR5 gives the observed dimers cryptosporioptides A, B and C as the final products of the pathway. The polypeptide is Decarboxylase dmxR15 (Cryptosporiopsis sp. (strain 8999)).